The primary structure comprises 298 residues: Zinc import ATP-binding protein ZnuC (298 aa).

Positions 17 to 232 constitute an ABC transporter domain; that stretch reads IELRNAGVYR…PEYVRLFGSR (216 aa). Residue 49–56 coordinates ATP; sequence GPNGAGKS. The interval 273 to 298 is disordered; the sequence is RGHCHVEDGHHHDHEHHHHEGGQPRA. Basic and acidic residues predominate over residues 276–298; the sequence is CHVEDGHHHDHEHHHHEGGQPRA.

Belongs to the ABC transporter superfamily. Zinc importer (TC 3.A.1.15.5) family. As to quaternary structure, the complex is composed of two ATP-binding proteins (ZnuC), two transmembrane proteins (ZnuB) and a solute-binding protein (ZnuA).

It is found in the cell inner membrane. It carries out the reaction Zn(2+)(out) + ATP(in) + H2O(in) = Zn(2+)(in) + ADP(in) + phosphate(in) + H(+)(in). Its function is as follows. Part of the ABC transporter complex ZnuABC involved in zinc import. Responsible for energy coupling to the transport system. This chain is Zinc import ATP-binding protein ZnuC, found in Brucella suis biovar 1 (strain 1330).